We begin with the raw amino-acid sequence, 674 residues long: ATP-dependent DNA helicase Hel308 (674 aa).

ATP is bound by residues Q27 and 44-51 (VPTAAGKT). Residues 31–197 (IEQIRKGRNV…WLDASLIKSD (167 aa)) form the Helicase ATP-binding domain. Positions 142-145 (DEIH) match the DEAH box motif. Positions 224-411 (SINQIIRETV…EAKVRFNTLA (188 aa)) constitute a Helicase C-terminal domain.

It belongs to the helicase family. Hel308 subfamily. Monomer.

It catalyses the reaction Couples ATP hydrolysis with the unwinding of duplex DNA by translocating in the 3'-5' direction.. The enzyme catalyses ATP + H2O = ADP + phosphate + H(+). DNA-dependent ATPase and 3'-5' DNA helicase that may be involved in repair of stalled replication forks. The polypeptide is ATP-dependent DNA helicase Hel308 (Thermoplasma acidophilum (strain ATCC 25905 / DSM 1728 / JCM 9062 / NBRC 15155 / AMRC-C165)).